The sequence spans 74 residues: Arabinogalactan protein 20 (74 aa).

Residues 1–26 (MASRNSVAVIALFAFVFAVISPFAGA) form the signal peptide. Gln27 is subject to Pyrrolidone carboxylic acid. 4-hydroxyproline is present on residues Pro31, Pro33, and Pro35. O-linked (Ara...) hydroxyproline glycans are attached at residues Pro31, Pro33, and Pro35. Residue Ser37 is the site of GPI-anchor amidated serine attachment. The propeptide at 38–74 (DGTSIDQGIAYLLMVVALVLTYLIHPLDASSSSYTFF) is removed in mature form.

This sequence belongs to the AG-peptide AGP family. Contains 4-hydroxyproline; hydroxylated on Pro-31, Pro-33 and Pro-35. In terms of processing, O-glycosylated on hydroxyprolines; noncontiguous hydroxylproline residues are glycosylated with arabinogalactan.

It is found in the cell membrane. In terms of biological role, proteoglycan that seems to be implicated in diverse developmental roles such as differentiation, cell-cell recognition, embryogenesis and programmed cell death. In Arabidopsis thaliana (Mouse-ear cress), this protein is Arabinogalactan protein 20.